Reading from the N-terminus, the 145-residue chain is Dihydrolipoyllysine-residue succinyltransferase component of 2-oxoglutarate dehydrogenase complex, mitochondrial (145 aa).

The Lipoyl-binding domain maps to 4 to 31 (ITVQTPAFAESVTEGDVRVEGGTPLFTL). The residue at position 14 (Ser-14) is a Phosphoserine. An N6-acetyllysine mark is found at Lys-36 and Lys-66. Catalysis depends on residues His-119 and Asp-123.

This sequence belongs to the 2-oxoacid dehydrogenase family. In terms of assembly, the 2-oxoglutarate dehydrogenase complex is composed of OGDH (2-oxoglutarate dehydrogenase; E1), DLST (dihydrolipoamide succinyltransferase; E2), DLD (dihydrolipoamide dehydrogenase; E3) and the assembly factor KGD4. It contains multiple copies of the three enzymatic components (E1, E2 and E3). In the nucleus, the 2-oxoglutarate dehydrogenase complex associates with KAT2A. Interacts with ABHD11; this interaction maintains the functional lipoylation of the 2-oxoglutarate dehydrogenase complex. It depends on (R)-lipoate as a cofactor.

Its subcellular location is the mitochondrion matrix. It localises to the nucleus. It carries out the reaction N(6)-[(R)-dihydrolipoyl]-L-lysyl-[protein] + succinyl-CoA = N(6)-[(R)-S(8)-succinyldihydrolipoyl]-L-lysyl-[protein] + CoA. It functions in the pathway amino-acid degradation; L-lysine degradation via saccharopine pathway; glutaryl-CoA from L-lysine: step 6/6. The protein operates within carbohydrate metabolism; tricarboxylic acid cycle. Dihydrolipoamide succinyltransferase (E2) component of the 2-oxoglutarate dehydrogenase complex. The 2-oxoglutarate dehydrogenase complex catalyzes the overall conversion of 2-oxoglutarate to succinyl-CoA and CO(2). The 2-oxoglutarate dehydrogenase complex is mainly active in the mitochondrion. A fraction of the 2-oxoglutarate dehydrogenase complex also localizes in the nucleus and is required for lysine succinylation of histones: associates with KAT2A on chromatin and provides succinyl-CoA to histone succinyltransferase KAT2A. This Mesocricetus auratus (Golden hamster) protein is Dihydrolipoyllysine-residue succinyltransferase component of 2-oxoglutarate dehydrogenase complex, mitochondrial.